Reading from the N-terminus, the 402-residue chain is APO protein 3, mitochondrial (402 aa).

The N-terminal 13 residues, 1–13 (MQRRKLVEISIFV), are a transit peptide targeting the mitochondrion. The tract at residues 37-59 (NDEDPLYADVPKPPKDKSERKPY) is disordered. A compositionally biased stretch (basic and acidic residues) spans 48–58 (KPPKDKSERKP). APO domains are found at residues 127–213 (RCRL…DLEK) and 294–380 (TCGY…PVPD).

Belongs to the APO family.

It is found in the mitochondrion. Functionally, may be involved in the stable assembly of several 4Fe-4S cluster-containing complexes of mitochondria. The sequence is that of APO protein 3, mitochondrial (APO3) from Arabidopsis thaliana (Mouse-ear cress).